The primary structure comprises 153 residues: Putative ubiquitin-conjugating enzyme E2 N-like (153 aa).

One can recognise a UBC core domain in the interval 3–150 (ELPHRIIKET…ARAWTRLYAM (148 aa)). Lys-83 is subject to N6-acetyllysine.

This sequence belongs to the ubiquitin-conjugating enzyme family. Expressed in epididymis (at protein level).

The polypeptide is Putative ubiquitin-conjugating enzyme E2 N-like (UBE2NL) (Homo sapiens (Human)).